We begin with the raw amino-acid sequence, 282 residues long: Centromere protein P (282 aa).

Residues 1–80 are a coiled coil; that stretch reads MEQKYEEDIQ…KDLRRQTEIN (80 aa).

The protein belongs to the CENP-P/CTF19 family.

The protein resides in the nucleus. Its subcellular location is the chromosome. The protein localises to the centromere. Its function is as follows. Probable component of a centromeric complex involved in assembly of kinetochore proteins, mitotic progression and chromosome segregation. This chain is Centromere protein P (cenpp), found in Danio rerio (Zebrafish).